Here is a 380-residue protein sequence, read N- to C-terminus: Probable tRNA sulfurtransferase (380 aa).

One can recognise a THUMP domain in the interval 58 to 162 (EEVIERLKKV…MAFVYAGVIE (105 aa)). ATP contacts are provided by residues 178–179 (LL), 203–204 (YF), arginine 260, glycine 282, and glutamine 291.

This sequence belongs to the ThiI family.

The protein resides in the cytoplasm. It carries out the reaction [ThiI sulfur-carrier protein]-S-sulfanyl-L-cysteine + a uridine in tRNA + 2 reduced [2Fe-2S]-[ferredoxin] + ATP + H(+) = [ThiI sulfur-carrier protein]-L-cysteine + a 4-thiouridine in tRNA + 2 oxidized [2Fe-2S]-[ferredoxin] + AMP + diphosphate. The catalysed reaction is [ThiS sulfur-carrier protein]-C-terminal Gly-Gly-AMP + S-sulfanyl-L-cysteinyl-[cysteine desulfurase] + AH2 = [ThiS sulfur-carrier protein]-C-terminal-Gly-aminoethanethioate + L-cysteinyl-[cysteine desulfurase] + A + AMP + 2 H(+). The protein operates within cofactor biosynthesis; thiamine diphosphate biosynthesis. Catalyzes the ATP-dependent transfer of a sulfur to tRNA to produce 4-thiouridine in position 8 of tRNAs, which functions as a near-UV photosensor. Also catalyzes the transfer of sulfur to the sulfur carrier protein ThiS, forming ThiS-thiocarboxylate. This is a step in the synthesis of thiazole, in the thiamine biosynthesis pathway. The sulfur is donated as persulfide by IscS. The protein is Probable tRNA sulfurtransferase of Thermoanaerobacter sp. (strain X514).